Consider the following 66-residue polypeptide: UPF0434 protein Nwi_0075 (66 aa).

The protein belongs to the UPF0434 family.

This chain is UPF0434 protein Nwi_0075, found in Nitrobacter winogradskyi (strain ATCC 25391 / DSM 10237 / CIP 104748 / NCIMB 11846 / Nb-255).